The following is a 111-amino-acid chain: Ig kappa chain V-III region PC 6684 (111 aa).

The segment at 1-23 (DIVLTQSPASLAVSLGQRATISC) is framework-1. C23 and C92 form a disulfide bridge. The interval 24-38 (RASKSVSTSGYSYMH) is complementarity-determining-1. A framework-2 region spans residues 39–53 (WYQQKPGQPPKLLIY). Positions 54-60 (LASNLES) are complementarity-determining-2. Residues 61 to 92 (GVPARFSGSGSGTDFTLNIHPVEEEDAATYYC) are framework-3. Positions 93–101 (QHSRELPRT) are complementarity-determining-3. A framework-4 region spans residues 102–111 (FGGGTKLEIK).

The polypeptide is Ig kappa chain V-III region PC 6684 (Mus musculus (Mouse)).